The primary structure comprises 479 residues: Ribulose bisphosphate carboxylase large chain (479 aa).

Residues 1 to 2 (MS) constitute a propeptide that is removed on maturation. N123 and T173 together coordinate substrate. K175 (proton acceptor) is an active-site residue. Substrate is bound at residue K177. Mg(2+)-binding residues include K201, D203, and E204. Position 201 is an N6-carboxylysine (K201). At S208 the chain carries Phosphoserine. The active-site Proton acceptor is H294. Residues R295 and H327 each contribute to the substrate site. T330 carries the phosphothreonine modification. S379 is a substrate binding site.

This sequence belongs to the RuBisCO large chain family. Type I subfamily. Heterohexadecamer of 8 large chains and 8 small chains; disulfide-linked. The disulfide link is formed within the large subunit homodimers. Mg(2+) is required as a cofactor. In terms of processing, the disulfide bond which can form in the large chain dimeric partners within the hexadecamer appears to be associated with oxidative stress and protein turnover.

The protein resides in the plastid. Its subcellular location is the chloroplast. It carries out the reaction 2 (2R)-3-phosphoglycerate + 2 H(+) = D-ribulose 1,5-bisphosphate + CO2 + H2O. The catalysed reaction is D-ribulose 1,5-bisphosphate + O2 = 2-phosphoglycolate + (2R)-3-phosphoglycerate + 2 H(+). Functionally, ruBisCO catalyzes two reactions: the carboxylation of D-ribulose 1,5-bisphosphate, the primary event in carbon dioxide fixation, as well as the oxidative fragmentation of the pentose substrate in the photorespiration process. Both reactions occur simultaneously and in competition at the same active site. This is Ribulose bisphosphate carboxylase large chain from Capsella bursa-pastoris (Shepherd's purse).